The chain runs to 87 residues: NADH dehydrogenase [ubiquinone] 1 alpha subcomplex subunit 4-like 2 (87 aa).

The protein belongs to the complex I NDUFA4 subunit family.

This chain is NADH dehydrogenase [ubiquinone] 1 alpha subcomplex subunit 4-like 2 (Ndufa4l2), found in Mus musculus (Mouse).